Consider the following 359-residue polypeptide: Heat-inducible transcription repressor HrcA (359 aa).

The protein belongs to the HrcA family.

Negative regulator of class I heat shock genes (grpE-dnaK-dnaJ and groELS operons). Prevents heat-shock induction of these operons. The chain is Heat-inducible transcription repressor HrcA from Sinorhizobium fredii (strain NBRC 101917 / NGR234).